A 107-amino-acid polypeptide reads, in one-letter code: Thioredoxin (107 aa).

The 106-residue stretch at 2–107 folds into the Thioredoxin domain; it reads PSPIQVTDFS…TLTNALKKYL (106 aa). Active-site nucleophile residues include Cys32 and Cys35. Cys32 and Cys35 are oxidised to a cystine.

The protein belongs to the thioredoxin family.

The protein resides in the plastid. Its subcellular location is the chloroplast. Functionally, participates in various redox reactions through the reversible oxidation of its active center dithiol to a disulfide and catalyzes dithiol-disulfide exchange reactions. The protein is Thioredoxin (trxA) of Cyanidium caldarium (Red alga).